Here is a 235-residue protein sequence, read N- to C-terminus: Large ribosomal subunit protein uL1 (235 aa).

It belongs to the universal ribosomal protein uL1 family. In terms of assembly, part of the 50S ribosomal subunit.

In terms of biological role, binds directly to 23S rRNA. The L1 stalk is quite mobile in the ribosome, and is involved in E site tRNA release. Protein L1 is also a translational repressor protein, it controls the translation of the L11 operon by binding to its mRNA. The chain is Large ribosomal subunit protein uL1 from Pseudarthrobacter chlorophenolicus (strain ATCC 700700 / DSM 12829 / CIP 107037 / JCM 12360 / KCTC 9906 / NCIMB 13794 / A6) (Arthrobacter chlorophenolicus).